The following is a 399-amino-acid chain: Elongation factor Tu (399 aa).

The tr-type G domain occupies 10–204 (KPHVNIGTIG…AVDSSIPEPE (195 aa)). A G1 region spans residues 19 to 26 (GHVDHGKT). 19–26 (GHVDHGKT) is a binding site for GTP. Thr-26 is a Mg(2+) binding site. The tract at residues 60–64 (GITIN) is G2. A G3 region spans residues 81–84 (DCPG). Residues 81-85 (DCPGH) and 136-139 (NKCD) contribute to the GTP site. A G4 region spans residues 136 to 139 (NKCD). The G5 stretch occupies residues 174–176 (SGL).

Belongs to the TRAFAC class translation factor GTPase superfamily. Classic translation factor GTPase family. EF-Tu/EF-1A subfamily. In terms of assembly, monomer.

The protein localises to the cytoplasm. It carries out the reaction GTP + H2O = GDP + phosphate + H(+). In terms of biological role, GTP hydrolase that promotes the GTP-dependent binding of aminoacyl-tRNA to the A-site of ribosomes during protein biosynthesis. The protein is Elongation factor Tu of Synechococcus sp. (strain CC9605).